The sequence spans 194 residues: Protein DROOPING LEAF (194 aa).

The segment at 15–42 adopts a C4-type zinc-finger fold; it reads CTYCNTVLAVGVPCKRLMDTVTVKCGHC. A disordered region spans residues 83–103; it reads LVSPTSNEGSPRAPFVVKPPE.

It belongs to the YABBY family.

It localises to the nucleus. In terms of biological role, regulates carpel specification in flower development. Severe or intermediate mutation in DL causes complete or partial homeotic conversion of carpels into stamens without affecting the identities of other floral organs. Interacts antagonistically with class B genes and controls floral meristem determinacy. Regulates midrib formation in leaves probably by inducing cell proliferation in the central region of the leaf. This chain is Protein DROOPING LEAF (DL), found in Oryza sativa subsp. japonica (Rice).